The primary structure comprises 252 residues: MAIDNRLLPNTLAAQAAALPSAWSQALAAPGVAQALDHIINHVEARLAAGATVYPATPLRALSSLAPSEVRVVILGQDPYHGPGQAQGLAFSVPDDCKCPPSLRNIFKEIGRDYALDGKPGHDLTPWVKQGVLLLNTALTVEDGQPASHAKRGWETVTDALFTQVAQDPTPKVFLLWGAHAQAKAALLPPGHAHLVLSANHPSPLSATRAPTPFIGCGHFRLTNEWLEKQGQTLIDWTATFKKIPAQAEFRL.

Aspartate 78 serves as the catalytic Proton acceptor.

It belongs to the uracil-DNA glycosylase (UDG) superfamily. UNG family.

It localises to the cytoplasm. It carries out the reaction Hydrolyzes single-stranded DNA or mismatched double-stranded DNA and polynucleotides, releasing free uracil.. Its function is as follows. Excises uracil residues from the DNA which can arise as a result of misincorporation of dUMP residues by DNA polymerase or due to deamination of cytosine. The protein is Uracil-DNA glycosylase of Bordetella avium (strain 197N).